The chain runs to 711 residues: Protein Smaug homolog 1 (711 aa).

Position 168 is a phosphoserine (serine 168). The tract at residues 278–323 (ARGPQCLPSDHAPLSPQSSVASSGSGGSEHLEDQTTARNTFQEEGS) is disordered. In terms of domain architecture, SAM spans 323–396 (SGMKDVPAWL…LKSLERDIIE (74 aa)). Serine 420 carries the phosphoserine modification. Disordered regions lie at residues 422–448 (STTPEVRCREPSLMESPSPDCKDSAAA) and 565–588 (NRGFGQSNSLPTASSVGSGMGRRN). Threonine 424 carries the post-translational modification Phosphothreonine. The residue at position 566 (arginine 566) is an Omega-N-methylarginine. The span at 568–581 (FGQSNSLPTASSVG) shows a compositional bias: polar residues. Serine 573 bears the Phosphoserine mark.

Belongs to the SMAUG family. In terms of tissue distribution, expressed in brain (at protein level).

Its subcellular location is the cytoplasm. It localises to the cell projection. The protein localises to the dendrite. It is found in the synapse. The protein resides in the synaptosome. Its function is as follows. Acts as a translational repressor of SRE-containing messengers. This is Protein Smaug homolog 1 (Samd4a) from Mus musculus (Mouse).